We begin with the raw amino-acid sequence, 183 residues long: Ribosome-recycling factor (183 aa).

Belongs to the RRF family.

Its subcellular location is the cytoplasm. Its function is as follows. Responsible for the release of ribosomes from messenger RNA at the termination of protein biosynthesis. May increase the efficiency of translation by recycling ribosomes from one round of translation to another. The polypeptide is Ribosome-recycling factor (Mycoplasma mobile (strain ATCC 43663 / 163K / NCTC 11711) (Mesomycoplasma mobile)).